A 218-amino-acid polypeptide reads, in one-letter code: N-(5'-phosphoribosyl)anthranilate isomerase (218 aa).

It belongs to the TrpF family.

It carries out the reaction N-(5-phospho-beta-D-ribosyl)anthranilate = 1-(2-carboxyphenylamino)-1-deoxy-D-ribulose 5-phosphate. It functions in the pathway amino-acid biosynthesis; L-tryptophan biosynthesis; L-tryptophan from chorismate: step 3/5. This is N-(5'-phosphoribosyl)anthranilate isomerase from Rhodopseudomonas palustris (strain HaA2).